Reading from the N-terminus, the 425-residue chain is Threonine synthase (425 aa).

Lys-105 is subject to N6-(pyridoxal phosphate)lysine.

It belongs to the threonine synthase family. The cofactor is pyridoxal 5'-phosphate.

The catalysed reaction is O-phospho-L-homoserine + H2O = L-threonine + phosphate. It participates in amino-acid biosynthesis; L-threonine biosynthesis; L-threonine from L-aspartate: step 5/5. Functionally, catalyzes the gamma-elimination of phosphate from L-phosphohomoserine and the beta-addition of water to produce L-threonine. The sequence is that of Threonine synthase (thrC) from Haemophilus influenzae (strain ATCC 51907 / DSM 11121 / KW20 / Rd).